The sequence spans 290 residues: Probable branched-chain-amino-acid aminotransferase (290 aa).

Residue Lys-155 is modified to N6-(pyridoxal phosphate)lysine.

Belongs to the class-IV pyridoxal-phosphate-dependent aminotransferase family. The cofactor is pyridoxal 5'-phosphate.

The enzyme catalyses L-leucine + 2-oxoglutarate = 4-methyl-2-oxopentanoate + L-glutamate. It carries out the reaction L-isoleucine + 2-oxoglutarate = (S)-3-methyl-2-oxopentanoate + L-glutamate. The catalysed reaction is L-valine + 2-oxoglutarate = 3-methyl-2-oxobutanoate + L-glutamate. Its pathway is amino-acid biosynthesis; L-isoleucine biosynthesis; L-isoleucine from 2-oxobutanoate: step 4/4. It functions in the pathway amino-acid biosynthesis; L-leucine biosynthesis; L-leucine from 3-methyl-2-oxobutanoate: step 4/4. The protein operates within amino-acid biosynthesis; L-valine biosynthesis; L-valine from pyruvate: step 4/4. Acts on leucine, isoleucine and valine. This is Probable branched-chain-amino-acid aminotransferase (ilvE) from Rickettsia felis (strain ATCC VR-1525 / URRWXCal2) (Rickettsia azadi).